Here is a 121-residue protein sequence, read N- to C-terminus: Dihydroneopterin aldolase (121 aa).

Substrate-binding positions include E22, Y54, and 73–74; that span reads IE. K100 (proton donor/acceptor) is an active-site residue.

Belongs to the DHNA family. In terms of assembly, homooctamer. Four molecules assemble into a ring, and two rings come together to give a cylinder with a hole of at least 13 a diameter.

The enzyme catalyses 7,8-dihydroneopterin = 6-hydroxymethyl-7,8-dihydropterin + glycolaldehyde. It catalyses the reaction 7,8-dihydroneopterin = 7,8-dihydromonapterin. It participates in cofactor biosynthesis; tetrahydrofolate biosynthesis; 2-amino-4-hydroxy-6-hydroxymethyl-7,8-dihydropteridine diphosphate from 7,8-dihydroneopterin triphosphate: step 3/4. Its function is as follows. Catalyzes the conversion of 7,8-dihydroneopterin to 6-hydroxymethyl-7,8-dihydropterin. Can also catalyze the epimerization of carbon 2' of dihydroneopterin to dihydromonapterin. The sequence is that of Dihydroneopterin aldolase (folB) from Staphylococcus epidermidis (strain ATCC 35984 / DSM 28319 / BCRC 17069 / CCUG 31568 / BM 3577 / RP62A).